We begin with the raw amino-acid sequence, 220 residues long: Uracil phosphoribosyltransferase 2 (220 aa).

A GTP-binding site is contributed by 77 to 80 (ARDI). Residues R87 and R113 each contribute to the 5-phospho-alpha-D-ribose 1-diphosphate site. R134 is a GTP binding site. Residues D140 and 140-148 (DPLLATGNS) each bind 5-phospho-alpha-D-ribose 1-diphosphate. A D-ribose 5-phosphate-binding site is contributed by Y204. Residues V205 and 210–212 (GDF) contribute to the uracil site. D211 contributes to the 5-phospho-alpha-D-ribose 1-diphosphate binding site.

This sequence belongs to the UPRTase family. Mg(2+) is required as a cofactor.

The enzyme catalyses UMP + diphosphate = 5-phospho-alpha-D-ribose 1-diphosphate + uracil. It participates in pyrimidine metabolism; UMP biosynthesis via salvage pathway; UMP from uracil: step 1/1. With respect to regulation, allosterically activated by GTP. Functionally, catalyzes the conversion of uracil and 5-phospho-alpha-D-ribose 1-diphosphate (PRPP) to UMP and diphosphate. The polypeptide is Uracil phosphoribosyltransferase 2 (Schizosaccharomyces pombe (strain 972 / ATCC 24843) (Fission yeast)).